A 424-amino-acid polypeptide reads, in one-letter code: UDP-N-acetylglucosamine 1-carboxyvinyltransferase (424 aa).

Position 22–23 (22–23 (KN)) interacts with phosphoenolpyruvate. Residue Arg98 coordinates UDP-N-acetyl-alpha-D-glucosamine. Cys122 serves as the catalytic Proton donor. Cys122 bears the 2-(S-cysteinyl)pyruvic acid O-phosphothioketal mark. UDP-N-acetyl-alpha-D-glucosamine contacts are provided by residues 127 to 131 (RPVDQ), Asp312, and Ile334.

Belongs to the EPSP synthase family. MurA subfamily.

The protein resides in the cytoplasm. The enzyme catalyses phosphoenolpyruvate + UDP-N-acetyl-alpha-D-glucosamine = UDP-N-acetyl-3-O-(1-carboxyvinyl)-alpha-D-glucosamine + phosphate. It participates in cell wall biogenesis; peptidoglycan biosynthesis. Functionally, cell wall formation. Adds enolpyruvyl to UDP-N-acetylglucosamine. This chain is UDP-N-acetylglucosamine 1-carboxyvinyltransferase, found in Xanthomonas oryzae pv. oryzae (strain MAFF 311018).